The chain runs to 308 residues: Glycine--tRNA ligase alpha subunit (308 aa).

This sequence belongs to the class-II aminoacyl-tRNA synthetase family. As to quaternary structure, tetramer of two alpha and two beta subunits.

It is found in the cytoplasm. The catalysed reaction is tRNA(Gly) + glycine + ATP = glycyl-tRNA(Gly) + AMP + diphosphate. This is Glycine--tRNA ligase alpha subunit from Polaromonas naphthalenivorans (strain CJ2).